A 351-amino-acid chain; its full sequence is tRNA-splicing endonuclease (351 aa).

Catalysis depends on residues Tyr-287, His-298, and Lys-329.

This sequence belongs to the tRNA-intron endonuclease family. Archaeal long subfamily. As to quaternary structure, homodimer.

The catalysed reaction is pretRNA = a 3'-half-tRNA molecule with a 5'-OH end + a 5'-half-tRNA molecule with a 2',3'-cyclic phosphate end + an intron with a 2',3'-cyclic phosphate and a 5'-hydroxyl terminus.. Endonuclease that removes tRNA introns. Cleaves pre-tRNA at the 5'- and 3'-splice sites to release the intron. The products are an intron and two tRNA half-molecules bearing 2',3' cyclic phosphate and 5'-OH termini. Recognizes a pseudosymmetric substrate in which 2 bulged loops of 3 bases are separated by a stem of 4 bp. The chain is tRNA-splicing endonuclease from Methanococcoides burtonii (strain DSM 6242 / NBRC 107633 / OCM 468 / ACE-M).